The chain runs to 2176 residues: Protein sidekick-2 (2176 aa).

The N-terminal stretch at 1–24 (MFSSMWRLPLWTLLALHRIHSAGA) is a signal peptide. The Extracellular portion of the chain corresponds to 25–1936 (QDDVPPYFKT…ASPFYEEWWF (1912 aa)). Ig-like C2-type domains are found at residues 30-112 (PYFK…TEVQ), 117-204 (GSFE…QPIT), 219-298 (PTII…SSVA), 312-402 (PQFV…LAVT), 406-495 (PNIT…ADLV), and 500-589 (TRIT…AHLR). A disulfide bond links C52 and C95. A glycan (N-linked (GlcNAc...) asparagine) is linked at N197. 4 cysteine pairs are disulfide-bonded: C241–C288, C334–C384, C427–C479, and C521–C573. Fibronectin type-III domains lie at 596–692 (APEH…LPEE), 697–793 (PPQN…TLQG), 798–897 (PPGN…THED), 901–995 (PVGH…VPPE), 999–1098 (APTN…TLQA), 1103–1201 (APAN…TRES), 1206–1303 (GPTN…TLDD), 1307–1401 (PPMG…TEKR), 1406–1503 (PPSK…TLQA), 1508–1625 (APTI…VGEA), 1630–1726 (APQN…TQQA), 1730–1825 (APGS…TGPG), and 1828–1930 (APGP…ASPF). N747 is a glycosylation site (N-linked (GlcNAc...) asparagine). N-linked (GlcNAc...) asparagine glycans are attached at residues N940 and N952. An N-linked (GlcNAc...) asparagine glycan is attached at N1106. A glycan (N-linked (GlcNAc...) asparagine) is linked at N1592. Residues 1712–1734 (DGPRSTPTRGQTQQAAPSAPGSV) form a disordered region. Positions 1716 to 1727 (STPTRGQTQQAA) are enriched in polar residues. The helical transmembrane segment at 1937–1957 (LVVIALVGLIFILLLVFVLII) threads the bilayer. Over 1958–2176 (RGQSKKYSKK…APIAGFSSFV (219 aa)) the chain is Cytoplasmic. Disordered stretches follow at residues 2013 to 2032 (GLYT…YSDE), 2043 to 2070 (AESS…VDTN), and 2102 to 2176 (QAYS…SSFV). Composition is skewed to polar residues over residues 2044–2070 (ESSS…VDTN) and 2119–2129 (VPNSNSTQQGS). Residues 2170–2176 (AGFSSFV) carry the PDZ-binding motif.

The protein belongs to the sidekick family. As to quaternary structure, homodimer; mediates homophilic interactions to promote cell adhesion. Interacts (via PDZ-binding motif) with MAGI1, MAGI2, DLG2, DLG3 and DLG4. Expressed in retinal ganglion cells (RGCs) that form synapses in distinct inner plexiform layer (IPL) sublaminae. Specifically expressed in specific subsets of retinal ganglion cells (RGCs), named W3B-RGCs, that specifically respond when the timing of the movement of a small object differs from that of the background, but not when they coincide (at protein level). Also present in excitatory amacrine cell type called VG3-ACs, that provide strong and selective input W3B-RGCs (at protein level). Expressed at low levels in the glomeruli.

It localises to the cell membrane. The protein localises to the synapse. Its function is as follows. Adhesion molecule that promotes lamina-specific synaptic connections in the retina and is specifically required for the formation of neuronal circuits that detect motion. Acts by promoting formation of synapses between two specific retinal cell types: the retinal ganglion cells W3B-RGCs and the excitatory amacrine cells VG3-ACs. Formation of synapses between these two cells plays a key role in detection of motion. Promotes synaptic connectivity via homophilic interactions. The protein is Protein sidekick-2 of Mus musculus (Mouse).